Consider the following 396-residue polypeptide: S-adenosylmethionine synthase (396 aa).

An ATP-binding site is contributed by His16. Asp18 lines the Mg(2+) pocket. Position 44 (Glu44) interacts with K(+). Residues Glu57 and Gln100 each contribute to the L-methionine site. The flexible loop stretch occupies residues 100–110 (QSVDIAQGVDR). ATP contacts are provided by residues 165–167 (DAK), 231–232 (KF), Asp240, 246–247 (RK), Ala263, and Lys267. Asp240 contributes to the L-methionine binding site. Lys271 is a binding site for L-methionine.

This sequence belongs to the AdoMet synthase family. Homotetramer; dimer of dimers. It depends on Mg(2+) as a cofactor. The cofactor is K(+).

Its subcellular location is the cytoplasm. The catalysed reaction is L-methionine + ATP + H2O = S-adenosyl-L-methionine + phosphate + diphosphate. It functions in the pathway amino-acid biosynthesis; S-adenosyl-L-methionine biosynthesis; S-adenosyl-L-methionine from L-methionine: step 1/1. Functionally, catalyzes the formation of S-adenosylmethionine (AdoMet) from methionine and ATP. The overall synthetic reaction is composed of two sequential steps, AdoMet formation and the subsequent tripolyphosphate hydrolysis which occurs prior to release of AdoMet from the enzyme. This Marinobacter nauticus (strain ATCC 700491 / DSM 11845 / VT8) (Marinobacter aquaeolei) protein is S-adenosylmethionine synthase.